The sequence spans 134 residues: Profilin-1 (134 aa).

A disulfide bond links cysteine 13 and cysteine 118. The Involved in PIP2 interaction motif lies at 84–100 (AVIRGKKGSGGITIKKT). Threonine 114 is modified (phosphothreonine).

The protein belongs to the profilin family. In terms of assembly, occurs in many kinds of cells as a complex with monomeric actin in a 1:1 ratio. Post-translationally, phosphorylated by MAP kinases.

It is found in the cytoplasm. Its subcellular location is the cytoskeleton. Its function is as follows. Binds to actin and affects the structure of the cytoskeleton. At high concentrations, profilin prevents the polymerization of actin, whereas it enhances it at low concentrations. This is Profilin-1 from Olea europaea (Common olive).